The primary structure comprises 457 residues: Putative adhesion G protein-coupled receptor E4P (457 aa).

The N-terminal stretch at 1-14 is a signal peptide; the sequence is MGSRFLLVLLSGAS. Intrachain disulfides connect Cys15-Cys24, Cys18-Cys30, Cys32-Cys52, Cys58-Cys71, Cys65-Cys80, and Cys82-Cys103. One can recognise an EGF-like 1 domain in the interval 15 to 53; the sequence is CPPCPKYASCHNSTHCTCEDGFRARSGRTYFHDSSEKCE. Residues 16–191 lie on the Extracellular side of the membrane; sequence PPCPKYASCH…LAPKEDPVLT (176 aa). Asn26 carries N-linked (GlcNAc...) asparagine glycosylation. In terms of domain architecture, EGF-like 2; calcium-binding spans 54–104; it reads DINECETGLAKCKYKAYCRNKVGGYICSCLVKYTLFNFLAGIIDYDHPDCY. Asn106 and Asn162 each carry an N-linked (GlcNAc...) asparagine glycan. The GAIN-B domain maps to 134 to 186; that stretch reads DKRTKHICVYWEGSEGGWSTEGCSHVHSNGSYTKCKCFHLSSFAVLVALAPKE. 2 disulfides stabilise this stretch: Cys141–Cys168 and Cys156–Cys170. Residues 141-186 form a GPS region; that stretch reads CVYWEGSEGGWSTEGCSHVHSNGSYTKCKCFHLSSFAVLVALAPKE. Residues 192–212 form a helical membrane-spanning segment; it reads VITQVGLTISLLCLFLAILTF. At 213-223 the chain is on the cytoplasmic side; sequence LLCRPIQNTST. Residues 224-244 traverse the membrane as a helical segment; it reads SLHLELSLCLFLAHLLFLTGI. The N-linked (GlcNAc...) asparagine glycan is linked to Asn245. At 245-250 the chain is on the extracellular side; it reads NRTEPE. Residues 251–271 traverse the membrane as a helical segment; it reads VLCSIIAGLLHFLYLACFTWM. At 272–299 the chain is on the cytoplasmic side; that stretch reads LLEGLHLFLTVRNLKVANYTSTGRFKKR. Residues 300 to 320 form a helical membrane-spanning segment; sequence FMYPVGYGIPAVIIAVSAIVG. The Extracellular portion of the chain corresponds to 321–336; the sequence is PQNYGTFTCWLKLDKG. Residues 337–357 traverse the membrane as a helical segment; the sequence is FIWSFMGPVAVIILINLVFYF. Residues 358-384 are Cytoplasmic-facing; it reads QVLWILRSKLSSLNKEVSTIQDTRVMT. A helical membrane pass occupies residues 385–405; that stretch reads FKAISQLFILGCSWGLGFFMV. Residues 406–413 lie on the Extracellular side of the membrane; that stretch reads EEVGKTIG. A helical membrane pass occupies residues 414 to 434; it reads SIIAYSFTIINTLQGVLLFVV. At 435–457 the chain is on the cytoplasmic side; it reads HCLLNRQVRLIILSVISLVPKSN.

It belongs to the G-protein coupled receptor 2 family. Adhesion G-protein coupled receptor (ADGR) subfamily. Forms a heterodimer, consisting of a large extracellular region (alpha subunit) non-covalently linked to a seven-transmembrane moiety (beta subunit). Post-translationally, glycosylated. Proteolytically cleaved into 2 subunits, an extracellular alpha subunit and a seven-transmembrane subunit.

It is found in the cell membrane. Its subcellular location is the secreted. Its function is as follows. May mediate the cellular interaction between myeloid cells and B-cells. The protein is Putative adhesion G protein-coupled receptor E4P of Homo sapiens (Human).